The following is a 328-amino-acid chain: Beta-ketoacyl-[acyl-carrier-protein] synthase III (328 aa).

Catalysis depends on residues Cys122 and His255. Residues 256–260 form an ACP-binding region; that stretch reads QANVR. Residue Asn285 is part of the active site.

The protein belongs to the thiolase-like superfamily. FabH family. Homodimer.

It is found in the cytoplasm. The catalysed reaction is malonyl-[ACP] + acetyl-CoA + H(+) = 3-oxobutanoyl-[ACP] + CO2 + CoA. It participates in lipid metabolism; fatty acid biosynthesis. Catalyzes the condensation reaction of fatty acid synthesis by the addition to an acyl acceptor of two carbons from malonyl-ACP. Catalyzes the first condensation reaction which initiates fatty acid synthesis and may therefore play a role in governing the total rate of fatty acid production. Possesses both acetoacetyl-ACP synthase and acetyl transacylase activities. Its substrate specificity determines the biosynthesis of branched-chain and/or straight-chain of fatty acids. The sequence is that of Beta-ketoacyl-[acyl-carrier-protein] synthase III from Bordetella petrii (strain ATCC BAA-461 / DSM 12804 / CCUG 43448).